The sequence spans 144 residues: Large ribosomal subunit protein uL11m (144 aa).

A mitochondrion-targeting transit peptide spans 1-32 (MASTRTTIIKLIVPAGKATPTPPIGPALGARG).

Belongs to the universal ribosomal protein uL11 family. As to quaternary structure, component of the mitochondrial large ribosomal subunit (mt-LSU). Mature yeast 74S mitochondrial ribosomes consist of a small (37S) and a large (54S) subunit. The 37S small subunit contains a 15S ribosomal RNA (15S mt-rRNA) and at least 32 different proteins. The 54S large subunit contains a 21S rRNA (21S mt-rRNA) and at least 45 different proteins.

It is found in the mitochondrion. The protein localises to the cytoplasm. Its function is as follows. Component of the mitochondrial ribosome (mitoribosome), a dedicated translation machinery responsible for the synthesis of mitochondrial genome-encoded proteins, including at least some of the essential transmembrane subunits of the mitochondrial respiratory chain. The mitoribosomes are attached to the mitochondrial inner membrane and translation products are cotranslationally integrated into the membrane. This is Large ribosomal subunit protein uL11m from Schizosaccharomyces pombe (strain 972 / ATCC 24843) (Fission yeast).